Here is a 329-residue protein sequence, read N- to C-terminus: Coiled-coil domain-containing protein 54 (329 aa).

Residues 86–149 adopt a coiled-coil conformation; that stretch reads NIVSSISNIQ…VTELESQNSY (64 aa). The span at 178-191 shows a compositional bias: polar residues; the sequence is TPKGTATSPDTVIS. The disordered stretch occupies residues 178–214; sequence TPKGTATSPDTVISSAEPERVSSYPEPTGELKKKTTS. Thr182 carries the post-translational modification Phosphothreonine.

This is Coiled-coil domain-containing protein 54 (Ccdc54) from Mus musculus (Mouse).